The primary structure comprises 419 residues: BTB/POZ domain-containing protein KCTD20 (419 aa).

A BTB domain is found at 117–191; the sequence is EKVTLLVDGT…YKTGIINCPD (75 aa).

Interacts with AKT1; AKT2 and AKT3. Associates with PP2CA. Part of a complex containing MARK4.

The protein resides in the cytoplasm. In terms of biological role, promotes the phosphorylation of AKT family members. The polypeptide is BTB/POZ domain-containing protein KCTD20 (KCTD20) (Homo sapiens (Human)).